A 220-amino-acid chain; its full sequence is DNA mismatch repair protein MutH (220 aa).

This sequence belongs to the MutH family.

The protein resides in the cytoplasm. Functionally, sequence-specific endonuclease that cleaves unmethylated GATC sequences. It is involved in DNA mismatch repair. The protein is DNA mismatch repair protein MutH of Buchnera aphidicola subsp. Baizongia pistaciae (strain Bp).